The primary structure comprises 422 residues: 26S proteasome non-ATPase regulatory subunit 11B (422 aa).

One can recognise a PCI domain in the interval 228–392 (AYSYFFEAFE…DVLIIFEEPP (165 aa)).

The protein belongs to the proteasome subunit S9 family. As to quaternary structure, component of the lid subcomplex of the 19S proteasome regulatory particle complex (also named PA700 complex). The 26S proteasome consists of a 20S proteasome core and two 19S regulatory subunits.

The protein resides in the nucleus. It localises to the cytoplasm. The protein localises to the cytosol. In terms of biological role, component of the lid subcomplex of the 26S proteasome, a multiprotein complex involved in the ATP-dependent degradation of ubiquitinated proteins. In the complex, psmd11b is required for proteasome assembly. The chain is 26S proteasome non-ATPase regulatory subunit 11B (psmd11b) from Danio rerio (Zebrafish).